A 590-amino-acid chain; its full sequence is MTLTLSVLICLGLSVGPRTCVQAGTLPKPTLWAEPASVIARGKPVTLWCQGPLETEEYRLDKEGLPWARKRQNPLEPGAKAKFHIPSTVYDSAGRYRCYYETPAGWSEPSDPLELVATGFYAEPTLLALPSPVVASGGNVTLQCDTLDGLLTFVLVEEEQKLPRTLYSQKLPKGPSQALFPVGPVTPSCRWRFRCYYYYRKNPQVWSNPSDLLEILVPGVSRKPSLLIPQGSVVARGGSLTLQCRSDVGYDIFVLYKEGEHDLVQGSGQQPQAGLSQANFTLGPVSRSHGGQYRCYGAHNLSPRWSAPSDPLDILIAGLIPDIPALSVQPGPKVASGENVTLLCQSWHQIDTFFLTKEGAAHPPLCLKSKYQSYRHQAEFSMSPVTSAQGGTYRCYSAIRSYPYLLSSPSYPQELVVSGPSGDPSLSPTGSTPTPGPEDQPLTPTGLDPQSGLGRHLGVVTGVSVAFVLLLFLLLFLLLRHRHQSKHRTSAHFYRPAGAAGPEPKDQGLQKRASPVADIQEEILNAAVKDTQPKDGVEMDAPAAASEAPQDVTYAQLHSLTLRREATEPPPSQEREPPAEPSIYAPLAIH.

A signal peptide spans 1–23 (MTLTLSVLICLGLSVGPRTCVQA). Residues 24–458 (GTLPKPTLWA…PQSGLGRHLG (435 aa)) lie on the Extracellular side of the membrane. Ig-like C2-type domains are found at residues 27–116 (PKPT…LELV), 111–228 (DPLE…SLLI), 224–313 (PSLL…DPLD), and 337–418 (GENV…LVVS). A disulfide bridge links C49 with C98. Residue N139 is glycosylated (N-linked (GlcNAc...) asparagine). Cystine bridges form between C144–C195 and C244–C295. N-linked (GlcNAc...) asparagine glycans are attached at residues N279 and N339. The cysteines at positions 344 and 395 are disulfide-linked. Over residues 416–433 (VVSGPSGDPSLSPTGSTP) the composition is skewed to low complexity. Residues 416–449 (VVSGPSGDPSLSPTGSTPTPGPEDQPLTPTGLDP) are disordered. The helical transmembrane segment at 459 to 479 (VVTGVSVAFVLLLFLLLFLLL) threads the bilayer. Topologically, residues 480–590 (RHRHQSKHRT…PSIYAPLAIH (111 aa)) are cytoplasmic. Disordered stretches follow at residues 488–514 (RTSA…KRAS) and 529–550 (KDTQ…EAPQ). Position 514 is a phosphoserine (S514). Residues 552–557 (VTYAQL) carry the ITIM motif 1 motif. Residues 562-578 (LRREATEPPPSQEREPP) show a composition bias toward basic and acidic residues. Residues 562–590 (LRREATEPPPSQEREPPAEPSIYAPLAIH) are disordered. The ITIM motif 2 signature appears at 582–587 (SIYAPL).

In terms of tissue distribution, detected in a natural killer (NK) cells.

It localises to the membrane. Functionally, may act as receptor for class I MHC antigens. This chain is Leukocyte immunoglobulin-like receptor subfamily B member 5 (LILRB5), found in Homo sapiens (Human).